The sequence spans 410 residues: LL-diaminopimelate aminotransferase (410 aa).

Substrate is bound by residues Tyr15 and Gly42. Pyridoxal 5'-phosphate contacts are provided by residues Tyr72, 108 to 109, Tyr132, Asn187, Tyr218, and 246 to 248; these read SK and SFS. Substrate contacts are provided by Lys109, Tyr132, and Asn187. An N6-(pyridoxal phosphate)lysine modification is found at Lys249. Pyridoxal 5'-phosphate contacts are provided by Arg257 and Asn292. Asn292 and Arg388 together coordinate substrate.

The protein belongs to the class-I pyridoxal-phosphate-dependent aminotransferase family. LL-diaminopimelate aminotransferase subfamily. As to quaternary structure, homodimer. Pyridoxal 5'-phosphate serves as cofactor.

The enzyme catalyses (2S,6S)-2,6-diaminopimelate + 2-oxoglutarate = (S)-2,3,4,5-tetrahydrodipicolinate + L-glutamate + H2O + H(+). Its pathway is amino-acid biosynthesis; L-lysine biosynthesis via DAP pathway; LL-2,6-diaminopimelate from (S)-tetrahydrodipicolinate (aminotransferase route): step 1/1. Involved in the synthesis of meso-diaminopimelate (m-DAP or DL-DAP), required for both lysine and peptidoglycan biosynthesis. Catalyzes the direct conversion of tetrahydrodipicolinate to LL-diaminopimelate. In Geobacter sulfurreducens (strain ATCC 51573 / DSM 12127 / PCA), this protein is LL-diaminopimelate aminotransferase.